Reading from the N-terminus, the 326-residue chain is Myeloid protein 1 (326 aa).

Residues 1 to 18 (MPALSLIALLSLVSTAFA) form the signal peptide. A run of 2 repeats spans residues 28-162 (QQGR…SDPT) and 177-312 (QQDA…SDPT). Cystine bridges form between Cys-37–Cys-74, Cys-48–Cys-53, and Cys-113–Cys-156. Zn(2+)-binding residues include His-67, Asp-71, and His-152. Residues 307–326 (DRSDPTSNLERGKGESEMEV) are disordered.

This sequence belongs to the LECT2/MIM-1 family. Post-translationally, substrate for arginine-specific ADP-ribosyltransferase.

Its subcellular location is the cytoplasmic granule. The sequence is that of Myeloid protein 1 (MIM1) from Gallus gallus (Chicken).